The sequence spans 198 residues: FMN-dependent NADH:quinone oxidoreductase (198 aa).

Ser-10 contacts FMN.

Belongs to the azoreductase type 1 family. As to quaternary structure, homodimer. The cofactor is FMN.

The enzyme catalyses 2 a quinone + NADH + H(+) = 2 a 1,4-benzosemiquinone + NAD(+). It carries out the reaction N,N-dimethyl-1,4-phenylenediamine + anthranilate + 2 NAD(+) = 2-(4-dimethylaminophenyl)diazenylbenzoate + 2 NADH + 2 H(+). In terms of biological role, quinone reductase that provides resistance to thiol-specific stress caused by electrophilic quinones. Functionally, also exhibits azoreductase activity. Catalyzes the reductive cleavage of the azo bond in aromatic azo compounds to the corresponding amines. This chain is FMN-dependent NADH:quinone oxidoreductase, found in Paraburkholderia phymatum (strain DSM 17167 / CIP 108236 / LMG 21445 / STM815) (Burkholderia phymatum).